The primary structure comprises 1446 residues: Receptor-type tyrosine-protein phosphatase U (1446 aa).

Positions 1 to 18 (MARAQALVLALTFQFCAP) are cleaved as a signal peptide. Topologically, residues 19-749 (ETETPAAGCT…QRSEEMGLIL (731 aa)) are extracellular. Residues 25 to 188 (AGCTFEEASD…ILLFSYPCAK (164 aa)) enclose the MAM domain. N-linked (GlcNAc...) asparagine glycosylation is present at N75. Residues 190-275 (PHFSRLGDVE…SQAPRGAGVS (86 aa)) form the Ig-like C2-type domain. A disulfide bridge connects residues C210 and C264. 4 Fibronectin type-III domains span residues 288-383 (PIAP…CAEP), 386-484 (APKG…TDED), 485-591 (VPGG…SAPS), and 592-668 (FDYA…FGAE). N410 carries an N-linked (GlcNAc...) asparagine glycan. N-linked (GlcNAc...) asparagine glycosylation is present at N685. The helical transmembrane segment at 750–770 (GICAGGLAVLILLLGAIIVII) threads the bilayer. The mediates interaction with CTNNB1 stretch occupies residues 771–887 (RKGRDRYAYS…DLLQHINQMK (117 aa)). At 771–1446 (RKGRDRYAYS…LEYLEALELR (676 aa)) the chain is on the cytoplasmic side. The tract at residues 830–867 (PGYSPRGDQRSGGVTEASSLLGGSPRRPCGRKGSPYHT) is disordered. Phosphoserine is present on residues S848, S853, and S863. Y865 carries the phosphotyrosine modification. 2 Tyrosine-protein phosphatase domains span residues 888-1144 (TAEG…ILEA) and 1176-1439 (LREE…ALEY). Substrate contacts are provided by residues E1053, 1085–1091 (CSAGTGR), and Q1129. The active-site Phosphocysteine intermediate is the C1085. Residue C1380 is the Phosphocysteine intermediate of the active site.

The protein belongs to the protein-tyrosine phosphatase family. Receptor class 2B subfamily. Forms homooligomeric complexes which mediate cell homotypic adhesion. Interacts (via the cytoplasmic juxtamembrane domain) with CTNNB1; may mediate interaction with the cadherin/catenin adhesion complex. Interacts with KIT. May interact with AP3B1. The extracellular domain is proteolytically processed through cleavage within the fibronectin type-III 4 domain. In addition to the 190 kDa full-length protein, proteolytic products of 100 kDa, 80 kDa and 73 kDa are observed. Post-translationally, N-glycosylated. In terms of processing, phosphorylated on tyrosine residues upon activation of KIT with stem cell factor (SCF). The 73 kDa proteolytic product is not phosphorylated. As to expression, transcripts of different sizes are differentially expressed in a subset of tissues. Detected in brain, lung, skeletal muscle, heart, kidney and placenta. In brain; expressed in olfactory bulb, cerebral cortex, hippocampus and cerebellum.

The protein resides in the cell junction. Its subcellular location is the cell membrane. The enzyme catalyses O-phospho-L-tyrosyl-[protein] + H2O = L-tyrosyl-[protein] + phosphate. Functionally, tyrosine-protein phosphatase which dephosphorylates CTNNB1. Regulates CTNNB1 function both in cell adhesion and signaling. May function in cell proliferation and migration and play a role in the maintenance of epithelial integrity. May play a role in megakaryocytopoiesis. This Mus musculus (Mouse) protein is Receptor-type tyrosine-protein phosphatase U (Ptpru).